Reading from the N-terminus, the 201-residue chain is 3-isopropylmalate dehydratase small subunit (201 aa).

Belongs to the LeuD family. LeuD type 1 subfamily. In terms of assembly, heterodimer of LeuC and LeuD.

The enzyme catalyses (2R,3S)-3-isopropylmalate = (2S)-2-isopropylmalate. Its pathway is amino-acid biosynthesis; L-leucine biosynthesis; L-leucine from 3-methyl-2-oxobutanoate: step 2/4. Functionally, catalyzes the isomerization between 2-isopropylmalate and 3-isopropylmalate, via the formation of 2-isopropylmaleate. The sequence is that of 3-isopropylmalate dehydratase small subunit from Shigella flexneri serotype 5b (strain 8401).